The sequence spans 260 residues: HTH-type transcriptional repressor NanR (260 aa).

The region spanning 27–95 is the HTH gntR-type domain; sequence KKLSEMVEEE…NGERARVSRP (69 aa). The H-T-H motif DNA-binding region spans 55 to 74; it reads ERELMAFFNVGRPSVREALA.

The protein belongs to the NanR family.

Its function is as follows. Transcriptional repressor that controls expression of the genes required for the catabolism of sialic acids. The sequence is that of HTH-type transcriptional repressor NanR from Citrobacter rodentium (strain ICC168) (Citrobacter freundii biotype 4280).